We begin with the raw amino-acid sequence, 424 residues long: MSDHGDVSLPPQDRVRILSQLGSAVELNEDIPPRRYYRSGVEIIRMASVYSEEGNIEHAFILYNKYITLFIEKLPKHRDYKSAIIPEKKDAVKKLKSVAFPKAEELKTELLRRYTKEYEQYKERKKKEEEELARNIAIQQELEKEKQRVAQQKQKQLEQEQFHAFEEMIQRQELEKERLKIVQEFGKVDPGPCGPLLPDLEKPCVDVAPSSPFSPTQTPDCNTGMRPAKPPVVDRSLKPGALSVIENVPTIEGLRHIVVPRNLCSEFLQLASANTAKGIETCGVLCGKLMRNEFTITHVLIPRQNGGPDYCHTENEEEIFFMQDDLGLLTLGWIHTHPTQTAFLSSVDLHTHCSYQMMLPESIAIVCSPKFQETGFFKLTDYGLQEISTCRQKGFHPHGRDPPLFCDCSHVTVKDRIVTITDLR.

The interval 1 to 127 is interaction with CHMP3; that stretch reads MSDHGDVSLP…YEQYKERKKK (127 aa). 2 positions are modified to phosphoserine: serine 2 and serine 48. Positions 227-231 are interaction with STAM; it reads PAKPP. Serine 243 is subject to Phosphoserine. Residues 257-388 enclose the MPN domain; it reads IVVPRNLCSE…LTDYGLQEIS (132 aa). Zn(2+) is bound by residues histidine 335, histidine 337, aspartate 348, histidine 350, cysteine 390, histidine 396, and histidine 398. The JAMM motif signature appears at 335 to 348; sequence HTHPTQTAFLSSVD.

It belongs to the peptidase M67C family. In terms of assembly, interacts with STAM. Interacts with SMAD6 and SMAD7. Interacts with CHMP3; the interaction appears to relieve the autoinhibition of CHMP3. Interacts with SMURF2 and RNF11; this interaction promotes ubiquitination. It depends on Zn(2+) as a cofactor. Post-translationally, phosphorylated after BMP type I receptor activation. Ubiquitinated by SMURF2 in the presence of RNF11. In terms of tissue distribution, expressed in brain.

Its subcellular location is the nucleus. It localises to the membrane. It is found in the cytoplasm. The protein localises to the early endosome. With respect to regulation, inhibited by N-ethylmaleimide. Its function is as follows. Zinc metalloprotease that specifically cleaves 'Lys-63'-linked polyubiquitin chains. Does not cleave 'Lys-48'-linked polyubiquitin chains. Plays a role in signal transduction for cell growth and MYC induction mediated by IL-2 and GM-CSF. Potentiates BMP (bone morphogenetic protein) signaling by antagonizing the inhibitory action of SMAD6 and SMAD7. Has a key role in regulation of cell surface receptor-mediated endocytosis and ubiquitin-dependent sorting of receptors to lysosomes. Endosomal localization of STAMBP is required for efficient EGFR degradation but not for its internalization. Involved in the negative regulation of PI3K-AKT-mTOR and RAS-MAP signaling pathways. The polypeptide is STAM-binding protein (Stambp) (Mus musculus (Mouse)).